The primary structure comprises 375 residues: Erythronate-4-phosphate dehydrogenase (375 aa).

Substrate contacts are provided by S45 and T66. D146 and T175 together coordinate NAD(+). R208 is an active-site residue. D232 lines the NAD(+) pocket. E237 is a catalytic residue. Catalysis depends on H254, which acts as the Proton donor. G257 serves as a coordination point for NAD(+). Y258 provides a ligand contact to substrate.

The protein belongs to the D-isomer specific 2-hydroxyacid dehydrogenase family. PdxB subfamily. In terms of assembly, homodimer.

It localises to the cytoplasm. The enzyme catalyses 4-phospho-D-erythronate + NAD(+) = (R)-3-hydroxy-2-oxo-4-phosphooxybutanoate + NADH + H(+). It functions in the pathway cofactor biosynthesis; pyridoxine 5'-phosphate biosynthesis; pyridoxine 5'-phosphate from D-erythrose 4-phosphate: step 2/5. Its function is as follows. Catalyzes the oxidation of erythronate-4-phosphate to 3-hydroxy-2-oxo-4-phosphonooxybutanoate. The sequence is that of Erythronate-4-phosphate dehydrogenase from Yersinia pseudotuberculosis serotype O:1b (strain IP 31758).